The chain runs to 145 residues: Large ribosomal subunit protein uL14m (145 aa).

The transit peptide at 1 to 30 (MAFSSGLWGPCVHMSRAFSQRCFSTTGSLG) directs the protein to the mitochondrion.

This sequence belongs to the universal ribosomal protein uL14 family. In terms of assembly, component of the mitochondrial ribosome large subunit (39S) which comprises a 16S rRNA and about 50 distinct proteins. Interacts with MALSU1.

The protein localises to the mitochondrion. Functionally, may form part of 2 intersubunit bridges in the assembled ribosome. Upon binding to MALSU1, intersubunit bridge formation is blocked, preventing ribosome formation and repressing translation. This Bos taurus (Bovine) protein is Large ribosomal subunit protein uL14m (MRPL14).